The following is a 372-amino-acid chain: MLKRKPSNASDKEKHQKPKRSSSFGNFDRFRNNSVSKSDDSIEVHDRELTNGSEEQSKTSSSGGSLGKKVRAISWTMKKKVGKKYIKALSEEKEEESGEEALPYRNSDPMIGTHTEKISLKASDSMDSLYSGQSSSSGITSCSDGTSNRDSFRLDDDSPYSGPFCGRAKVHTDFTPSPYDTDSLKIKKGDIIDIICKTPMGMWTGMLNNKVGNFKFIYVDVILEEEAAPKKIKVPRSRRRENHQTIQEFLERIHLQEYTSTLLLNGYETLDDLKDIKESHLIELNIADPEDRARLLSAAESLLDEETTVEHEKESVPLSSNPDILSASQLEDCPRDSGCYISSENSDNGKEDLESENLSDMVQKIAITESSD.

A disordered region spans residues 1–71 (MLKRKPSNAS…SGGSLGKKVR (71 aa)). Residues 20 to 25 (RSSSFG) carry the Important for interaction with 14-3-3 proteins motif. Phosphoserine occurs at positions 23 and 34. The segment covering 37–49 (KSDDSIEVHDREL) has biased composition (basic and acidic residues). Residues 52–63 (GSEEQSKTSSSG) show a composition bias toward low complexity. Ser74 is subject to Phosphoserine. The residue at position 76 (Thr76) is a Phosphothreonine. A phosphoserine mark is found at Ser90, Ser97, and Ser119. The disordered stretch occupies residues 90 to 111 (SEEKEEESGEEALPYRNSDPMI). Low complexity predominate over residues 129–146 (LYSGQSSSSGITSCSDGT). Residues 129-153 (LYSGQSSSSGITSCSDGTSNRDSFR) form a disordered region. The residue at position 160 (Tyr160) is a Phosphotyrosine. The 62-residue stretch at 163 to 224 (PFCGRAKVHT…KFIYVDVILE (62 aa)) folds into the SH3 domain. The region spanning 241–305 (ENHQTIQEFL…LSAAESLLDE (65 aa)) is the SAM domain. A disordered region spans residues 304 to 372 (DEETTVEHEK…QKIAITESSD (69 aa)). The segment covering 317–329 (PLSSNPDILSASQ) has biased composition (polar residues).

In terms of assembly, interacts with FASLG. Interacts with phosphotyrosine containing proteins. Interacts (via SH3 domain) with CTTN. Interacts (phosphorylated at Ser-23) with YWHAB, YWHAE, YWHAG, YWHAH, YWHAZ and SFN. Interacts directly with SAP30 and HDAC1. Identified in a complex with SAP30 and HDAC1. Detected in spleen and lymph node (at protein level).

The protein resides in the nucleus. The protein localises to the cytoplasm. It localises to the cell projection. It is found in the ruffle. Its function is as follows. Negative regulator of B-cell activation. Down-regulates cell proliferation (in vitro). Promotes RAC1-dependent membrane ruffle formation and reorganization of the actin cytoskeleton. Regulates cell spreading and cell polarization. Stimulates HDAC1 activity. Regulates LYN activity by modulating its tyrosine phosphorylation. This is SAM domain-containing protein SAMSN-1 (Samsn1) from Mus musculus (Mouse).